Consider the following 407-residue polypeptide: S-adenosylmethionine synthase (407 aa).

Histidine 19 contacts ATP. Position 21 (aspartate 21) interacts with Mg(2+). Glutamate 47 provides a ligand contact to K(+). Glutamate 60 and glutamine 103 together coordinate L-methionine. Positions 103–113 (QSQEIADGVDN) are flexible loop. A disordered region spans residues 107–134 (IADGVDNSDEARTNGDVEEDDRAGAGDQ). ATP contacts are provided by residues 178-180 (DGK), aspartate 258, 264-265 (RK), alanine 281, and lysine 285. Position 258 (aspartate 258) interacts with L-methionine. Lysine 289 is a binding site for L-methionine.

This sequence belongs to the AdoMet synthase family. In terms of assembly, homotetramer; dimer of dimers. It depends on Mg(2+) as a cofactor. K(+) serves as cofactor.

Its subcellular location is the cytoplasm. The enzyme catalyses L-methionine + ATP + H2O = S-adenosyl-L-methionine + phosphate + diphosphate. It participates in amino-acid biosynthesis; S-adenosyl-L-methionine biosynthesis; S-adenosyl-L-methionine from L-methionine: step 1/1. Functionally, catalyzes the formation of S-adenosylmethionine (AdoMet) from methionine and ATP. The overall synthetic reaction is composed of two sequential steps, AdoMet formation and the subsequent tripolyphosphate hydrolysis which occurs prior to release of AdoMet from the enzyme. This Corynebacterium glutamicum (strain ATCC 13032 / DSM 20300 / JCM 1318 / BCRC 11384 / CCUG 27702 / LMG 3730 / NBRC 12168 / NCIMB 10025 / NRRL B-2784 / 534) protein is S-adenosylmethionine synthase.